A 166-amino-acid chain; its full sequence is Lipoprotein signal peptidase (166 aa).

4 helical membrane-spanning segments follow: residues 10–30 (GGAL…DQLT), 46–66 (LTPF…GFLA), 71–91 (WQRW…CYLL), and 100–120 (FSLS…DRLI). Residues Asp-126 and Asp-144 contribute to the active site. The chain crosses the membrane as a helical span at residues 135 to 155 (WHWPAFNLADSAITVGAVLLI).

It belongs to the peptidase A8 family.

The protein localises to the cell inner membrane. It carries out the reaction Release of signal peptides from bacterial membrane prolipoproteins. Hydrolyzes -Xaa-Yaa-Zaa-|-(S,diacylglyceryl)Cys-, in which Xaa is hydrophobic (preferably Leu), and Yaa (Ala or Ser) and Zaa (Gly or Ala) have small, neutral side chains.. Its pathway is protein modification; lipoprotein biosynthesis (signal peptide cleavage). In terms of biological role, this protein specifically catalyzes the removal of signal peptides from prolipoproteins. This is Lipoprotein signal peptidase from Burkholderia thailandensis (strain ATCC 700388 / DSM 13276 / CCUG 48851 / CIP 106301 / E264).